The sequence spans 1186 residues: Trafficking protein particle complex II-specific subunit 120 homolog (1186 aa).

Disordered stretches follow at residues 777–824 (PTDS…EKES) and 964–984 (TKDPPPGSPSSSRNPSFSEKN). Residues 779–792 (DSDNTMSSGRNAAG) are compositionally biased toward polar residues. Position 971 is a phosphoserine (S971). The span at 972-981 (PSSSRNPSFS) shows a compositional bias: low complexity.

This sequence belongs to the TRS120 family. As to quaternary structure, part of the multisubunit TRAPP (transport protein particle) II complex composed of BET3, BET5, TRS20, TRS23, TRS31, TRS33, TRS65, TRS85, TRS120 and TRS130. Expressed in roots, leaves, stems and flowers.

It localises to the golgi apparatus. The protein localises to the trans-Golgi network. Its subcellular location is the early endosome. Its function is as follows. Specific subunit of the TRAPP II complex, a highly conserved vesicle tethering complex that is required for the proper transport of proteins in post-Golgi trafficking pathways to the growing cell plate in mitotic active cells. Required for the polarized and selective transport of PIN2 and probably PIN1 to the plasma membrane. Not required for ER-to-Golgi as well as biosynthetic and endocytic vacuolar transport. The sequence is that of Trafficking protein particle complex II-specific subunit 120 homolog from Arabidopsis thaliana (Mouse-ear cress).